The chain runs to 147 residues: Hemoglobin subunit beta-1 (147 aa).

Position 2 is an N-acetylserine (Ser2). A Globin domain is found at 3–147 (FLSAEEKGLV…VASALAHRYH (145 aa)). At Lys18 the chain carries N6-succinyllysine. 2 positions are modified to phosphoserine: Ser45 and Ser51. Lys60 carries the post-translational modification N6-succinyllysine. Residues His64 and His93 each contribute to the heme b site. Arg105 carries the asymmetric dimethylarginine modification.

This sequence belongs to the globin family. In terms of assembly, heterotetramer of two alpha chains and two beta chains. Red blood cells.

In terms of biological role, involved in oxygen transport from the lung to the various peripheral tissues. This is Hemoglobin subunit beta-1 (HBB1) from Panthera onca (Jaguar).